A 259-amino-acid chain; its full sequence is Phosphate import ATP-binding protein PstB 2 (259 aa).

In terms of domain architecture, ABC transporter spans 12–254; sequence ISARGLNVHY…PKEPLTQGYI (243 aa). 44–51 contributes to the ATP binding site; the sequence is GPSGCGKS.

The protein belongs to the ABC transporter superfamily. Phosphate importer (TC 3.A.1.7) family. The complex is composed of two ATP-binding proteins (PstB), two transmembrane proteins (PstC and PstA) and a solute-binding protein (PstS).

It is found in the cell inner membrane. It catalyses the reaction phosphate(out) + ATP + H2O = ADP + 2 phosphate(in) + H(+). Part of the ABC transporter complex PstSACB involved in phosphate import. Responsible for energy coupling to the transport system. The chain is Phosphate import ATP-binding protein PstB 2 from Paramagnetospirillum magneticum (strain ATCC 700264 / AMB-1) (Magnetospirillum magneticum).